Reading from the N-terminus, the 71-residue chain is Protein MTH_1184 (71 aa).

The chain is Protein MTH_1184 from Methanothermobacter thermautotrophicus (strain ATCC 29096 / DSM 1053 / JCM 10044 / NBRC 100330 / Delta H) (Methanobacterium thermoautotrophicum).